Consider the following 367-residue polypeptide: Quinolinate synthase (367 aa).

Iminosuccinate-binding residues include His-45 and Ser-62. A [4Fe-4S] cluster-binding site is contributed by Cys-109. Iminosuccinate-binding positions include 140–142 (YVN) and Ser-161. Cys-229 is a [4Fe-4S] cluster binding site. Iminosuccinate-binding positions include 255 to 257 (HPE) and Thr-272. Residue Cys-319 coordinates [4Fe-4S] cluster.

It belongs to the quinolinate synthase family. Type 3 subfamily. The cofactor is [4Fe-4S] cluster.

It localises to the cytoplasm. The catalysed reaction is iminosuccinate + dihydroxyacetone phosphate = quinolinate + phosphate + 2 H2O + H(+). Its pathway is cofactor biosynthesis; NAD(+) biosynthesis; quinolinate from iminoaspartate: step 1/1. Functionally, catalyzes the condensation of iminoaspartate with dihydroxyacetone phosphate to form quinolinate. This chain is Quinolinate synthase, found in Anoxybacillus flavithermus (strain DSM 21510 / WK1).